The primary structure comprises 247 residues: Proteasome subunit alpha type-7 (247 aa).

It belongs to the peptidase T1A family. The 26S proteasome consists of a 20S proteasome core and two 19S regulatory subunits. The 20S proteasome core is composed of 28 subunits that are arranged in four stacked rings, resulting in a barrel-shaped structure. The two end rings are each formed by seven alpha subunits, and the two central rings are each formed by seven beta subunits. The catalytic chamber with the active sites is on the inside of the barrel.

It localises to the cytoplasm. Its subcellular location is the nucleus. The proteasome is a multicatalytic proteinase complex which is characterized by its ability to cleave peptides with Arg, Phe, Tyr, Leu, and Glu adjacent to the leaving group at neutral or slightly basic pH. The proteasome has an ATP-dependent proteolytic activity. The polypeptide is Proteasome subunit alpha type-7 (PSA4) (Trypanosoma brucei brucei).